The sequence spans 183 residues: PLAT domain-containing protein 2 (183 aa).

The N-terminal stretch at 1–25 is a signal peptide; it reads MMPRRDVLFLSLLLVIATVSAVALA. Residues 31 to 158 form the PLAT domain; it reads CVYTFFLRTG…SPYELSAVRN (128 aa).

Its subcellular location is the endoplasmic reticulum. Its function is as follows. Involved in response to abiotic stress. This Arabidopsis thaliana (Mouse-ear cress) protein is PLAT domain-containing protein 2.